A 309-amino-acid chain; its full sequence is Ribosomal RNA small subunit methyltransferase H (309 aa).

Residues 44–46, D62, F102, D118, and Q125 each bind S-adenosyl-L-methionine; that span reads GGH. The interval 289–309 is disordered; sequence LEQQRNSRARSAKLRVAARSS.

This sequence belongs to the methyltransferase superfamily. RsmH family.

It localises to the cytoplasm. It catalyses the reaction cytidine(1402) in 16S rRNA + S-adenosyl-L-methionine = N(4)-methylcytidine(1402) in 16S rRNA + S-adenosyl-L-homocysteine + H(+). Specifically methylates the N4 position of cytidine in position 1402 (C1402) of 16S rRNA. This is Ribosomal RNA small subunit methyltransferase H from Synechococcus sp. (strain JA-3-3Ab) (Cyanobacteria bacterium Yellowstone A-Prime).